The sequence spans 236 residues: Bidirectional sugar transporter SWEET2 (236 aa).

Over 1-15 (MDVFAFNASLSMCKD) the chain is Extracellular. Asn7 carries an N-linked (GlcNAc...) asparagine glycan. The helical transmembrane segment at 16–36 (VAGIAGNIFAFGLFVSPMPTF) threads the bilayer. The region spanning 18–103 (GIAGNIFAFG…ILFIMHTDKK (86 aa)) is the MtN3/slv 1 domain. The Cytoplasmic segment spans residues 37-50 (RRIMRNKSTEQFSG). A helical membrane pass occupies residues 51–71 (LPYIYALLNCLICLWYGTPFI). The Extracellular segment spans residues 72 to 76 (SHSNA). Residues 77 to 97 (MLMTVNSVGATFQLCYIILFI) traverse the membrane as a helical segment. Residues 98–108 (MHTDKKNKMKM) lie on the Cytoplasmic side of the membrane. Residues 109 to 129 (LGLLFVVFAVVGVIVAGSLQI) form a helical membrane-spanning segment. Topologically, residues 130–137 (PDQLTRWY) are extracellular. Residues 138–158 (FVGFLSCGSLVSMFASPLFVI) form a helical membrane-spanning segment. Positions 138–221 (FVGFLSCGSL…LALYCYYHRN (84 aa)) constitute a MtN3/slv 2 domain. Topologically, residues 159–170 (NLVIRTKSVEFM) are cytoplasmic. Residues 171-191 (PFYLSLSTFLMSASFLLYGLF) form a helical membrane-spanning segment. The Extracellular segment spans residues 192–194 (NSD). A helical membrane pass occupies residues 195 to 215 (AFVYTPNGIGTILGIVQLALY). At 216 to 236 (CYYHRNSIEEETKEPLIVSYV) the chain is on the cytoplasmic side.

It belongs to the SWEET sugar transporter family. Forms heterooligomers with SWEET17.

The protein localises to the cell membrane. Its function is as follows. Mediates both low-affinity uptake and efflux of sugar across the plasma membrane. The sequence is that of Bidirectional sugar transporter SWEET2 from Arabidopsis thaliana (Mouse-ear cress).